The sequence spans 99 residues: 10 kDa heat shock protein, mitochondrial (99 aa).

The protein belongs to the GroES chaperonin family. In terms of assembly, homoheptamer arranged in a ring structure. 2 heptameric Hsp10 rings interact with a Hsp60 tetradecamer in the structure of a back-to-back double heptameric ring to form the symmetrical football complex.

Its subcellular location is the mitochondrion matrix. In terms of biological role, co-chaperonin implicated in mitochondrial protein import and macromolecular assembly. Together with Hsp60, facilitates the correct folding of imported proteins. May also prevent misfolding and promote the refolding and proper assembly of unfolded polypeptides generated under stress conditions in the mitochondrial matrix. The functional units of these chaperonins consist of heptameric rings of the large subunit Hsp60, which function as a back-to-back double ring. In a cyclic reaction, Hsp60 ring complexes bind one unfolded substrate protein per ring, followed by the binding of ATP and association with 2 heptameric rings of the co-chaperonin Hsp10. This leads to sequestration of the substrate protein in the inner cavity of Hsp60 where, for a certain period of time, it can fold undisturbed by other cell components. Synchronous hydrolysis of ATP in all Hsp60 subunits results in the dissociation of the chaperonin rings and the release of ADP and the folded substrate protein. The chain is 10 kDa heat shock protein, mitochondrial (hspe1) from Oryzias latipes (Japanese rice fish).